Here is a 295-residue protein sequence, read N- to C-terminus: Ribosomal RNA small subunit methyltransferase A (295 aa).

S-adenosyl-L-methionine is bound by residues Asn-25, Leu-27, Gly-52, Glu-73, Asp-98, and Asn-120.

The protein belongs to the class I-like SAM-binding methyltransferase superfamily. rRNA adenine N(6)-methyltransferase family. RsmA subfamily.

The protein resides in the cytoplasm. It carries out the reaction adenosine(1518)/adenosine(1519) in 16S rRNA + 4 S-adenosyl-L-methionine = N(6)-dimethyladenosine(1518)/N(6)-dimethyladenosine(1519) in 16S rRNA + 4 S-adenosyl-L-homocysteine + 4 H(+). Its function is as follows. Specifically dimethylates two adjacent adenosines (A1518 and A1519) in the loop of a conserved hairpin near the 3'-end of 16S rRNA in the 30S particle. May play a critical role in biogenesis of 30S subunits. This is Ribosomal RNA small subunit methyltransferase A from Desulfotalea psychrophila (strain LSv54 / DSM 12343).